The chain runs to 893 residues: MSATSTRNKHSKIHGNEKVDITKDEFARMRLALQDEEFRKLFFDYVDEIQDPENRKIYEQEITQLEKERGVDVTFIHPKPGFVVKTAIDGELKCFINICGSQIVERPNNEVAINSETGERGLTWSIPMAQAPARDDIDANKKLCKVFDVVFHPDALHLGTRNSQFRKCLIDTALDGVEREFNVNLDRANLKYPKLDYKGEPHATVIRKLSKNATAEEREPHPLEHTYPKKPEANAGKPKVLPMKKNVTSTPTFAVPKYSIKHSHDIDMAQYTDELDAKLQVTIPRALIVEIELPLLSSTADCQLDVTEKSVYLLSERSGAKYRLKLDLPYTVDDKSGNARFDTEHRRLCITLPVVRSSAREQRQMHDNVRILSREDSGVELNSNSESPAEDEEAGSEAIVELTTMQQTQTDNFDAFPPRQSFLKRDLHYQMVANFDCNIVENVMAFLLHVPNVQPDSMRTVIREGRSVHLQFASMGSGYYPTNYAFLVQLPDAADPQLHIDHVEPDASDDNVVLRLFMSESCMTLPSYLAGPDATDLTEYACFPPCKTNIEDENCDLELDKPLRISTYHNELNKSIEVTIIPQDISEQVHQEQQQEEEEEEEQHEQQQHQHKKGNKKQRKRNKKQRSLSESAFEDLKAEQQQQHQKQQQQQEKLPENSSPESLNAGSSEPVATLKLPQRKQRSFSECNDSSSVQRGILKRFSRYGPRPSISESSSSIDDCSSSYSCSVDAAGIGFSHSFGGIPEERVIADAELSESCKKTVRFNDHIMKKMFRLDSSILGQRKKNQKRRDCKLRAQQRRVSEGDSVDYEEVEHASNGQQTANKTAANAQYFKQPQNNNNRSYSKNNKNQSLHDSGLDLTNNNNHNNEEDTKRNEADAKNAMIFEMDDDDDEDM.

Disordered regions lie at residues 211–243 (KNAT…VLPM), 372–395 (LSRE…EEAG), 587–719 (EQVH…SIDD), 781–821 (QRKK…QQTA), and 834–893 (PQNN…DEDM). A compositionally biased stretch (basic and acidic residues) spans 214–232 (TAEEREPHPLEHTYPKKPE). Ser-377 carries the post-translational modification Phosphoserine. A compositionally biased stretch (acidic residues) spans 594 to 603 (QQEEEEEEEQ). Basic residues predominate over residues 609–626 (HQHKKGNKKQRKRNKKQR). Positions 640–651 (QQQQHQKQQQQQ) are enriched in low complexity. Composition is skewed to polar residues over residues 656–667 (ENSSPESLNAGS) and 684–694 (FSECNDSSSVQ). Residues 709–719 (SISESSSSIDD) are compositionally biased toward low complexity. A compositionally biased stretch (basic residues) spans 781–797 (QRKKNQKRRDCKLRAQQ). Ser-801 bears the Phosphoserine mark. The span at 836-848 (NNNNRSYSKNNKN) shows a compositional bias: low complexity. The span at 865-877 (NNEEDTKRNEADA) shows a compositional bias: basic and acidic residues. The segment covering 884–893 (EMDDDDDEDM) has biased composition (acidic residues).

The protein belongs to the PIH1 family. Kintoun subfamily. As to quaternary structure, interacts with Pp1alpha-96A, Pp1-87B, Pp1-13C and flw.

It localises to the cytoplasm. In terms of biological role, required for cytoplasmic pre-assembly of axonemal dyneins, thereby playing a central role in motility in cilia and flagella. Involved in pre-assembly of dynein arm complexes in the cytoplasm before intraflagellar transport loads them for the ciliary compartment. The protein is Protein kintoun of Drosophila grimshawi (Hawaiian fruit fly).